The following is a 345-amino-acid chain: NADH-quinone oxidoreductase subunit H (345 aa).

8 helical membrane-spanning segments follow: residues 14-34 (IILA…LFLV), 84-104 (FILA…VIPF), 115-135 (VAIL…IMGG), 161-181 (IGLI…GDIV), 187-207 (GWGF…LFFI), 248-268 (YIAI…GWLS), 277-297 (VLWM…VKAI), and 309-329 (LGWK…AFAA).

This sequence belongs to the complex I subunit 1 family. NDH-1 is composed of 14 different subunits. Subunits NuoA, H, J, K, L, M, N constitute the membrane sector of the complex.

The protein localises to the cell inner membrane. It catalyses the reaction a quinone + NADH + 5 H(+)(in) = a quinol + NAD(+) + 4 H(+)(out). In terms of biological role, NDH-1 shuttles electrons from NADH, via FMN and iron-sulfur (Fe-S) centers, to quinones in the respiratory chain. The immediate electron acceptor for the enzyme in this species is believed to be ubiquinone. Couples the redox reaction to proton translocation (for every two electrons transferred, four hydrogen ions are translocated across the cytoplasmic membrane), and thus conserves the redox energy in a proton gradient. This subunit may bind ubiquinone. This is NADH-quinone oxidoreductase subunit H from Ruegeria pomeroyi (strain ATCC 700808 / DSM 15171 / DSS-3) (Silicibacter pomeroyi).